The following is a 967-amino-acid chain: Isoleucine--tRNA ligase (967 aa).

Positions 64 to 74 match the 'HIGH' region motif; sequence PYANGNIHIGH. E600 is an L-isoleucyl-5'-AMP binding site. The 'KMSKS' region motif lies at 641–645; sequence KQSKS. Position 644 (K644) interacts with ATP.

It belongs to the class-I aminoacyl-tRNA synthetase family. IleS type 1 subfamily. Monomer.

It is found in the cytoplasm. The enzyme catalyses tRNA(Ile) + L-isoleucine + ATP = L-isoleucyl-tRNA(Ile) + AMP + diphosphate. Functionally, catalyzes the attachment of isoleucine to tRNA(Ile). As IleRS can inadvertently accommodate and process structurally similar amino acids such as valine, to avoid such errors it has two additional distinct tRNA(Ile)-dependent editing activities. One activity is designated as 'pretransfer' editing and involves the hydrolysis of activated Val-AMP. The other activity is designated 'posttransfer' editing and involves deacylation of mischarged Val-tRNA(Ile). This Agrobacterium fabrum (strain C58 / ATCC 33970) (Agrobacterium tumefaciens (strain C58)) protein is Isoleucine--tRNA ligase.